A 378-amino-acid polypeptide reads, in one-letter code: 4-hydroxy-3-methylbut-2-en-1-yl diphosphate synthase (flavodoxin) (378 aa).

C268, C271, C303, and E310 together coordinate [4Fe-4S] cluster. Residues 359 to 378 (AEREKEKEKEKEKEKETQEQ) form a disordered region.

Belongs to the IspG family. [4Fe-4S] cluster serves as cofactor.

The catalysed reaction is (2E)-4-hydroxy-3-methylbut-2-enyl diphosphate + oxidized [flavodoxin] + H2O + 2 H(+) = 2-C-methyl-D-erythritol 2,4-cyclic diphosphate + reduced [flavodoxin]. The protein operates within isoprenoid biosynthesis; isopentenyl diphosphate biosynthesis via DXP pathway; isopentenyl diphosphate from 1-deoxy-D-xylulose 5-phosphate: step 5/6. Functionally, converts 2C-methyl-D-erythritol 2,4-cyclodiphosphate (ME-2,4cPP) into 1-hydroxy-2-methyl-2-(E)-butenyl 4-diphosphate. In Bacillus cereus (strain ZK / E33L), this protein is 4-hydroxy-3-methylbut-2-en-1-yl diphosphate synthase (flavodoxin).